The following is a 485-amino-acid chain: Hexokinase-1 (485 aa).

A Hexokinase domain is found at 21-468 (KELMDEIHQL…SGAGAAVIAA (448 aa)). The hexokinase small subdomain stretch occupies residues 75–209 (TGKESGNYLA…ELPIEIVALI (135 aa)). Residues 86 to 91 (DLGGTN) and Lys111 each bind ATP. Substrate is bound by residues Ser158, 175–176 (TK), 210–211 (ND), and Asn237. Positions 210-457 (NDTVGTLIAS…DPITIVPAED (248 aa)) are hexokinase large subdomain. At Ser245 the chain carries Phosphoserine. Glu269 provides a ligand contact to substrate. Residue Ser272 is modified to Phosphoserine. Position 302 (Glu302) interacts with substrate. Residues 307-308 (GY), 344-348 (TSYPA), and 419-423 (SVYNK) each bind ATP.

The protein belongs to the hexokinase family. In terms of assembly, homodimer.

The catalysed reaction is a D-hexose + ATP = a D-hexose 6-phosphate + ADP + H(+). It catalyses the reaction D-fructose + ATP = D-fructose 6-phosphate + ADP + H(+). It carries out the reaction D-glucose + ATP = D-glucose 6-phosphate + ADP + H(+). It participates in carbohydrate metabolism; hexose metabolism. The protein operates within carbohydrate degradation; glycolysis; D-glyceraldehyde 3-phosphate and glycerone phosphate from D-glucose: step 1/4. With respect to regulation, subject to allosteric control. Substrate inhibition by ATP. Its function is as follows. Catalyzes the phosphorylation of hexose, such as D-glucose and D-fructose, to hexose 6-phosphate (D-glucose 6-phosphate and D-fructose 6-phosphate, respectively). Mediates the initial step of glycolysis by catalyzing phosphorylation of D-glucose to D-glucose 6-phosphate. The polypeptide is Hexokinase-1 (HXK1) (Saccharomyces cerevisiae (strain ATCC 204508 / S288c) (Baker's yeast)).